Reading from the N-terminus, the 197-residue chain is Holliday junction branch migration complex subunit RuvA (197 aa).

A domain I region spans residues 1-64; sequence MIASIRGILI…EDSLTLYGFE (64 aa). Residues 65 to 145 form a domain II region; that stretch reads TVEQRQLFET…GLPTGAAVTP (81 aa). The interval 146–148 is flexible linker; it reads AVA. The segment at 148-197 is domain III; the sequence is AAANAELSEALISLGFTDAEAAAAIAALPSDAPPDLEERVRLALRYFSAS.

The protein belongs to the RuvA family. As to quaternary structure, homotetramer. Forms an RuvA(8)-RuvB(12)-Holliday junction (HJ) complex. HJ DNA is sandwiched between 2 RuvA tetramers; dsDNA enters through RuvA and exits via RuvB. An RuvB hexamer assembles on each DNA strand where it exits the tetramer. Each RuvB hexamer is contacted by two RuvA subunits (via domain III) on 2 adjacent RuvB subunits; this complex drives branch migration. In the full resolvosome a probable DNA-RuvA(4)-RuvB(12)-RuvC(2) complex forms which resolves the HJ.

The protein resides in the cytoplasm. In terms of biological role, the RuvA-RuvB-RuvC complex processes Holliday junction (HJ) DNA during genetic recombination and DNA repair, while the RuvA-RuvB complex plays an important role in the rescue of blocked DNA replication forks via replication fork reversal (RFR). RuvA specifically binds to HJ cruciform DNA, conferring on it an open structure. The RuvB hexamer acts as an ATP-dependent pump, pulling dsDNA into and through the RuvAB complex. HJ branch migration allows RuvC to scan DNA until it finds its consensus sequence, where it cleaves and resolves the cruciform DNA. This chain is Holliday junction branch migration complex subunit RuvA, found in Roseiflexus sp. (strain RS-1).